We begin with the raw amino-acid sequence, 738 residues long: Glycogen [starch] synthase, muscle (738 aa).

At Ser-8 the chain carries Phosphoserine; by AMPK and PKA. Phosphoserine is present on Ser-11. Lys-39 lines the UDP pocket. Residues His-205 and Arg-211 each coordinate UDP-alpha-D-glucose. 5 residues coordinate alpha-D-glucose 6-phosphate: His-291, Glu-292, Gln-294, His-297, and Lys-301. Arg-331 contacts UDP. Residue Arg-331 participates in UDP-alpha-D-glucose binding. Ser-412 carries the post-translational modification Phosphoserine. His-501 contributes to the alpha-D-glucose 6-phosphate binding site. UDP-alpha-D-glucose contacts are provided by Glu-510, Trp-512, and Gly-513. Residue Thr-515 participates in UDP binding. Residues Arg-582 and Arg-586 each coordinate alpha-D-glucose 6-phosphate. Residues 632–738 (QGYRYPRPAS…PTSSLGEERN (107 aa)) are disordered. Phosphoserine is present on residues Ser-641 and Ser-645. Position 649 is a phosphoserine; by GSK3-alpha and GSK3-beta (Ser-649). A phosphoserine mark is found at Ser-652, Ser-653, Ser-657, and Ser-672. The segment covering 682–695 (AKDRRNIRAPEWPR) has biased composition (basic and acidic residues). Phosphoserine occurs at positions 698, 709, and 711. A compositionally biased stretch (low complexity) spans 698 to 738 (SCSSSTGGSKRSNSVDTGPSSSLSTPTEPLSPTSSLGEERN). Thr-722 is subject to Phosphothreonine. 2 positions are modified to phosphoserine: Ser-728 and Ser-732.

Belongs to the glycosyltransferase 3 family. As to quaternary structure, part of the GYS1-GYG1 complex, a heterooctamer composed of a tetramer of GYS1 and 2 dimers of GYG1, where each GYS1 protomer binds to one GYG1 subunit (via GYG1 C-terminus); the GYS1 tetramer may dissociate from GYG1 dimers to continue glycogen polymerization on its own. In terms of processing, phosphorylation at Ser-8 by AMPK inactivates the enzyme activity. Primed phosphorylation at Ser-657 (site 5) by CSNK2A1 and CSNK2A2 is required for inhibitory phosphorylation at Ser-641 (site 3a), Ser-645 (site 3b), Ser-649 (site 3c) and Ser-653 (site 4) by GSK3A an GSK3B. Phosphorylated at Ser-641 by PASK, leading to inactivation; phosphorylation by PASK is inhibited by glycogen. Phosphorylated at Ser-641 by DYRK2, leading to inactivation. Dephosphorylation at Ser-641 and Ser-645 by PP1 activates the enzyme.

The catalysed reaction is [(1-&gt;4)-alpha-D-glucosyl](n) + UDP-alpha-D-glucose = [(1-&gt;4)-alpha-D-glucosyl](n+1) + UDP + H(+). It functions in the pathway glycan biosynthesis; glycogen biosynthesis. Its activity is regulated as follows. Allosteric activation by glucose-6-phosphate. Phosphorylation reduces the activity towards UDP-glucose. When in the non-phosphorylated state, glycogen synthase does not require glucose-6-phosphate as an allosteric activator; when phosphorylated it does. Functionally, glycogen synthase participates in the glycogen biosynthetic process along with glycogenin and glycogen branching enzyme. Extends the primer composed of a few glucose units formed by glycogenin by adding new glucose units to it. In this context, glycogen synthase transfers the glycosyl residue from UDP-Glc to the non-reducing end of alpha-1,4-glucan. This chain is Glycogen [starch] synthase, muscle (Gys1), found in Rattus norvegicus (Rat).